We begin with the raw amino-acid sequence, 4128 residues long: DNA-dependent protein kinase catalytic subunit (4128 aa).

An N6-acetyllysine modification is found at Lys117. The stretch at 288–323 (DNYVSLFEVLLKWCAHTNVELKKAALSALESFLKQV) is one HEAT 1 repeat. A phosphoserine mark is found at Ser511 and Ser687. Lys828 carries the post-translational modification N6-acetyllysine. A phosphoserine mark is found at Ser841 and Ser893. The HEAT 2 repeat unit spans residues 1004–1040 (QDTVALLEAILDGIVDPVDSTLRDFCGRCIREFLKWS). Ser1065 bears the Phosphoserine mark. Residue Lys1209 is modified to N6-acetyllysine. An interaction with C1D region spans residues 1503-1538 (LDLSCKQLASGLLELAFAFGGLCERLVSLLLNPAVL). A leucine-zipper region spans residues 1503–1538 (LDLSCKQLASGLLELAFAFGGLCERLVSLLLNPAVL). The TPR 1 repeat unit spans residues 1723 to 1756 (PMQSREFPPGTPRFNNYVDCMKKFLDALELSQSP). Lys1970 bears the N6-acetyllysine mark. Positions 2050 to 2073 (QSYSYSSQDPRPATGRFRRREQRD) are disordered. Ser2056 is subject to Phosphoserine; by autocatalysis. Lys2259 is subject to N6-acetyllysine. Residues 2436–3212 (LDIIYKMMPK…DNSMNVDQDG (777 aa)) form a KIP-binding region. Thr2535 carries the phosphothreonine modification. Thr2609 is modified (phosphothreonine; by autocatalysis). At Ser2612 the chain carries Phosphoserine; by autocatalysis. A phosphothreonine; by autocatalysis mark is found at Thr2638 and Thr2647. The interval 2737–2765 (EKLSLMYARKGVAEQKREKEIKSELKMKQ) is may split the end of the DNA molecule, with the two strands separating around the region. Ser2789 carries the phosphoserine modification. The FAT domain maps to 2906-3539 (PAKRVRGKAR…VYPFIISSES (634 aa)). TPR repeat units follow at residues 2920–2948 (VLRW…SEIG) and 2949–2982 (TKQI…QDWV). The tract at residues 3200–3222 (LPEDNSMNVDQDGDPSDRMEVQE) is disordered. The residue at position 3205 (Ser3205) is a Phosphoserine. N6-acetyllysine is present on residues Lys3241, Lys3260, Lys3621, Lys3638, and Lys3642. Residues 3722 to 4053 (FDERVTVMAS…ICYAKRKLAG (332 aa)) enclose the PI3K/PI4K catalytic domain. Residues 3728–3734 (VMASLRR) form a G-loop region. Phosphoserine is present on residues Ser3731 and Ser3821. Residues 3919–3927 (GIGDRHLNN) form a catalytic loop region. The tract at residues 3939–3964 (GIDFGHAFGSATQFLPVPELMPFRLT) is activation loop. The residue at position 4026 (Ser4026) is a Phosphoserine. One can recognise an FATC domain in the interval 4096-4128 (SGLSEETQVKCLMDQATDPNILGRTWEGWEPWM).

This sequence belongs to the PI3/PI4-kinase family. As to quaternary structure, DNA-PK is a heterotrimer of PRKDC and the Ku dimer (composed of XRCC6/Ku70 and XRCC5/Ku86). Formation of this complex may be promoted by interaction with ILF3. Component of the core long-range non-homologous end joining (NHEJ) complex (also named DNA-PK complex) composed of PRKDC, LIG4, XRCC4, XRCC6/Ku70, XRCC5/Ku86 and NHEJ1/XLF. Additional component of the NHEJ complex includes PAXX. Following autophosphorylation, PRKDC dissociates from DNA. Interacts with DNA-PKcs-interacting protein (KIP) with the region upstream the kinase domain. PRKDC alone also interacts with and phosphorylates DCLRE1C, thereby activating the latent endonuclease activity of this protein. Interacts with C1D. Interacts with TTI1 and TELO2. Interacts with CIB1. Interacts with SETX. Interacts with NR4A3; the DNA-dependent protein kinase complex DNA-PK phosphorylates and activates NR4A3 and prevents NR4A3 ubiquitination and degradation. Interacts with BRAT1. Part of the HDP-RNP complex composed of at least HEXIM1, PRKDC, XRCC5, XRCC6, paraspeckle proteins (SFPQ, NONO, PSPC1, RBM14, and MATR3) and NEAT1 RNA. Interacts with KAT5. Post-translationally, autophosphorylated at two clusters, the T2609 cluster and the S2056 cluster. Autophosphorylated on Ser-2056, Thr-2609, Thr-2638 and Thr-2647. Ser-2056 and Thr-2609 are DNA damage-inducible phosphorylation sites (inducible with ionizing radiation, IR) dephosphorylated by PPP5C. Autophosphorylation induces a conformational change that leads to remodeling of the DNA-PK complex, requisite for efficient end processing and DNA repair. Autophosphorylation in trans within DNA-PK complexes loaded on DNA ends leads to the dissociation of PRKDC from DNA and the transition into the short-range NHEJ complex. Autophosphorylation of the T2609 cluster is required for hematopoietic development and protein synthesis in erythrocytes precursors. S-nitrosylated by GAPDH. In terms of processing, polyubiquitinated by RNF144A, leading to proteasomal degradation.

It localises to the nucleus. The protein localises to the nucleolus. It is found in the cytoplasm. Its subcellular location is the cytosol. The catalysed reaction is L-seryl-[protein] + ATP = O-phospho-L-seryl-[protein] + ADP + H(+). It catalyses the reaction L-threonyl-[protein] + ATP = O-phospho-L-threonyl-[protein] + ADP + H(+). Its activity is regulated as follows. Activity seems to be attenuated by autophosphorylation. Binding to the SL1 region of U3 small nucleolar RNA promotes auto-phosphorylation activity. Inhibited by wortmannin. Functionally, serine/threonine-protein kinase that acts as a molecular sensor for DNA damage. Involved in DNA non-homologous end joining (NHEJ) required for double-strand break (DSB) repair and V(D)J recombination. Must be bound to DNA to express its catalytic properties. Promotes processing of hairpin DNA structures in V(D)J recombination by activation of the hairpin endonuclease artemis (DCLRE1C). Recruited by XRCC5 and XRCC6 to DNA ends and is required to (1) protect and align broken ends of DNA, thereby preventing their degradation, (2) and sequester the DSB for repair by NHEJ. Acts as a scaffold protein to aid the localization of DNA repair proteins to the site of damage. The assembly of the DNA-PK complex at DNA ends is also required for the NHEJ ligation step. Found at the ends of chromosomes, suggesting a further role in the maintenance of telomeric stability and the prevention of chromosomal end fusion. Also involved in modulation of transcription. As part of the DNA-PK complex, involved in the early steps of ribosome assembly by promoting the processing of precursor rRNA into mature 18S rRNA in the small-subunit processome. Binding to U3 small nucleolar RNA, recruits PRKDC and XRCC5/Ku86 to the small-subunit processome. Recognizes the substrate consensus sequence [ST]-Q. Phosphorylates 'Ser-139' of histone variant H2AX, thereby regulating DNA damage response mechanism. Phosphorylates ASF1A, DCLRE1C, c-Abl/ABL1, histone H1, HSPCA, c-jun/JUN, p53/TP53, PARP1, POU2F1, DHX9, FH, SRF, NHEJ1/XLF, XRCC1, XRCC4, XRCC5, XRCC6, WRN, MYC and RFA2. Can phosphorylate C1D not only in the presence of linear DNA but also in the presence of supercoiled DNA. Ability to phosphorylate p53/TP53 in the presence of supercoiled DNA is dependent on C1D. Acts as a regulator of the phosphatidylinositol 3-kinase/protein kinase B signal transduction by mediating phosphorylation of 'Ser-473' of protein kinase B (PKB/AKT1, PKB/AKT2, PKB/AKT3), promoting their activation. Contributes to the determination of the circadian period length by antagonizing phosphorylation of CRY1 'Ser-588' and increasing CRY1 protein stability, most likely through an indirect mechanism. Plays a role in the regulation of DNA virus-mediated innate immune response by assembling into the HDP-RNP complex, a complex that serves as a platform for IRF3 phosphorylation and subsequent innate immune response activation through the cGAS-STING pathway. Also regulates the cGAS-STING pathway by catalyzing phosphorylation of CGAS, thereby impairing CGAS oligomerization and activation. Also regulates the cGAS-STING pathway by mediating phosphorylation of PARP1. This is DNA-dependent protein kinase catalytic subunit (PRKDC) from Homo sapiens (Human).